We begin with the raw amino-acid sequence, 240 residues long: Uridylate kinase (240 aa).

Lys-12–Gly-15 lines the ATP pocket. Residues Gly-20–Gly-25 are involved in allosteric activation by GTP. Gly-54 provides a ligand contact to UMP. Residues Gly-55 and Arg-59 each contribute to the ATP site. Residues Asp-74 and Thr-135–Thr-142 each bind UMP. Asn-163, Tyr-169, and Asp-172 together coordinate ATP.

The protein belongs to the UMP kinase family. As to quaternary structure, homohexamer.

The protein resides in the cytoplasm. The enzyme catalyses UMP + ATP = UDP + ADP. Its pathway is pyrimidine metabolism; CTP biosynthesis via de novo pathway; UDP from UMP (UMPK route): step 1/1. Allosterically activated by GTP. Inhibited by UTP. Functionally, catalyzes the reversible phosphorylation of UMP to UDP. This chain is Uridylate kinase, found in Lactiplantibacillus plantarum (strain ATCC BAA-793 / NCIMB 8826 / WCFS1) (Lactobacillus plantarum).